Reading from the N-terminus, the 706-residue chain is Choline transporter-like protein 2 (706 aa).

The Cytoplasmic portion of the chain corresponds to 1–33 (MGKEQQLYYGKHGTPQKYDPAFRGPIYNRGCTD). Phosphothreonine is present on T14. The chain crosses the membrane as a helical span at residues 34-54 (IICCVFLFLAIVGYVAVGIIA). Residues 55–232 (WTHGDPRKVI…RIFEDYTVSW (178 aa)) are Extracellular-facing. 2 N-linked (GlcNAc...) asparagine glycosylation sites follow: N187 and N200. Residues 233–253 (YWIIIGLIIAMVLSLLFIILL) form a helical membrane-spanning segment. At 254–256 (RFL) the chain is on the cytoplasmic side. The chain crosses the membrane as a helical span at residues 257–277 (AGIMVWVMIVMVILVLGYGIL). Over 278 to 315 (HCYMEYARLRGEAGSDVSLVDLGFQTDFRVYLHLRQTW) the chain is Extracellular. The helical transmembrane segment at 316–336 (VAFMIILSIVEVIIILLLIFL) threads the bilayer. The Cytoplasmic portion of the chain corresponds to 337 to 364 (RKRILIAIALIKEASRAVGYVMCSLLYP). Residues 365 to 385 (LVTFFLLCLCIAYWASTAIFL) traverse the membrane as a helical segment. At 386 to 457 (STSNEAVYKI…FNVFMFFWLA (72 aa)) the chain is on the extracellular side. N-linked (GlcNAc...) asparagine glycans are attached at residues N397 and N417. Residues 458–480 (NFVLALGQVTLAGAFASYYWAMN) traverse the membrane as a helical segment. The Cytoplasmic segment spans residues 481 to 504 (KPDDLPAFPLFSAFGRALRYHTGS). A helical membrane pass occupies residues 505–525 (LAFGSLLLAIVQVIRVILEYL). Topologically, residues 526–563 (DQRLKAAENKFAKFLMSCLKCCFWCLEKFIKFLNRNAY) are extracellular. The helical transmembrane segment at 564–584 (IMIAIYGTNFCTSARNAFFLL) threads the bilayer. The Cytoplasmic portion of the chain corresponds to 585-599 (MRNIIRVAVLDKVTD). Residues 600–620 (FLFLLGKLLIVGSVGILAFFF) form a helical membrane-spanning segment. Over 621–638 (FTHRIRIVQDTAPSLNYY) the chain is Extracellular. The chain crosses the membrane as a helical span at residues 639–659 (WVPVVTVVIGSYLIAHGFFSV). Residues 660–706 (YGMCVDTLFLCFLEDLERNDGTPERPYFMSLTLKKILNKTNKRQAEA) lie on the Cytoplasmic side of the membrane.

It belongs to the CTL (choline transporter-like) family. Interacts with COCH. N-glycosylated.

It is found in the cell membrane. Its subcellular location is the mitochondrion outer membrane. The catalysed reaction is choline(out) + n H(+)(in) = choline(in) + n H(+)(out). The enzyme catalyses ethanolamine(out) + n H(+)(in) = ethanolamine(in) + n H(+)(out). Choline/H+ antiporter, mainly in mitochodria. Also acts as a low-affinity ethanolamine/H+ antiporter, regulating the supply of extracellular ethanolamine (Etn) for the CDP-Etn pathway, redistribute intracellular Etn and balance the CDP-Cho and CDP-Etn arms of the Kennedy pathway. The protein is Choline transporter-like protein 2 (SLC44A2) of Bos taurus (Bovine).